Consider the following 2249-residue polypeptide: Endoribonuclease Dcr-1 (2249 aa).

Residues 1–371 (MAFHWCDNNL…SPKVRRLLQT (371 aa)) are essential for miRNA substrate recognition. An important for interaction with loqs isoform PB (loqs-PB) region spans residues 1-690 (MAFHWCDNNL…SKQPPTACDI (690 aa)). Residues 1 to 761 (MAFHWCDNNL…AEIDTAHSLA (761 aa)) form a helicase domain region. The interval 1–1042 (MAFHWCDNNL…VSLELAKERV (1042 aa)) is necessary for processing certain pre-miRNas, such as pre-let 7 and pre-bantam. 37 to 44 (LGHRSSKE) is an ATP binding site. The segment at 371-491 (TLRCFKPEEV…HHRDHNDGSD (121 aa)) is dispensable for activity and substrate recognition. The disordered stretch occupies residues 436 to 486 (TTEDRQTNRSAARVTPTPTPAHAKPKPSSGANTAQPRTRRRVYTRRHHRDH). The segment covering 472 to 484 (RTRRRVYTRRHHR) has biased composition (basic residues). The region spanning 485-648 (DHNDGSDTLC…TGDTTEADSD (164 aa)) is the Helicase C-terminal domain. The segment at 496–606 (LIYCNQNHTA…VQCKGRARAA (111 aa)) is essential for miRNA substrate recognition. The segment at 617 to 761 (SYKSPTVGSV…AEIDTAHSLA (145 aa)) is dispensable for activity and substrate recognition. 2 disordered regions span residues 640-665 (GDTT…PYTF) and 705-757 (LDTS…IDTA). A compositionally biased stretch (low complexity) spans 716 to 726 (SMSNTSPSESS). Positions 825–920 (AIALVNKYCA…QPIGKEGFRA (96 aa)) constitute a Dicer dsRNA-binding fold domain. The segment at 924–957 (DWECFELEPEDEQIVQLSDEPRPGTTKRRQYYYK) is wing domain. Residues 963–1108 (FCDCRPVAGA…WQFLELIQAN (146 aa)) are platform domain. Residues 1100 to 1246 (QFLELIQANG…LVPELCTVHP (147 aa)) form the PAZ domain. The essential for production of mature miRNAs from pre-miRNAs. Also important for proper formation of the siRISC complex but is dispensable for biogenesis of siRNAs stretch occupies residues 1147–2249 (QYFYVAEICP…KKQGLIAKKD (1103 aa)). The interval 1314–1351 (ESKQKESLKDDTINGKDLADVEKKPTSEETQLDKDSKD) is disordered. Phosphoserine is present on serine 1423. The segment at 1426–1477 (FWDVSNGESGFKGPKSSQNKQGGKGKAKGPAKPTFNYYDSDNSLGSSYDDDD) is disordered. The segment covering 1437-1446 (KGPKSSQNKQ) has biased composition (low complexity). Over residues 1462 to 1471 (YYDSDNSLGS) the composition is skewed to polar residues. RNase III domains are found at residues 1698–1919 (ITSA…IECG) and 1993–2150 (FEEF…LDSN). Positions 1745 and 1749 each coordinate Mg(2+). Phosphoserine is present on residues serine 1877 and serine 1880. Mg(2+) contacts are provided by aspartate 1905, glutamate 1908, glutamate 2032, aspartate 2136, and glutamate 2139. Positions 2175–2241 (VPKSPIRELL…AKCALRQLKK (67 aa)) constitute a DRBM domain.

The protein belongs to the helicase family. Dicer subfamily. As to quaternary structure, component of the miRNA-directed RISC loading complex (miRLC), composed of at least Dcr-1, AGO1 and loqs, which processes pre-miRNAs and loads the resulting miRNAs into the Argonaute 1 (AGO1)-containing RNA-induced silencing complex (miRISC). Interacts (via helicase domain) with dicing cofactor loqs isoform-PB (loqs-PB) (via DRBM 3 domain); this interaction enhances processing of pre-miRNAs by increasing substrate binding affinity of the dicer. Also able to interact with loqs isoforms PA and PC, however the relevance of such interactions are unclear in vivo. Different regions of the Dcr-1-loqs-PB heterodimer collaborate to recognize, bind and position the pre-miRNA for Dcr-1 mediated cleavage. In the absence of authentic miRNA substrates, the heterodimer favors a closed, catalytically incompetent, conformation, whereas binding of authentic pre-miRNA substrates stabilizes the relatively rare open, catalytically competent, conformation of the heterodimer. During substrate recognition, the Dcr-1 PAZ domain and pre-miRNA interact with the DRBM 1 domain of loqs-PB, which likely contributes to substrate recognition and stabilization. At the miRNA binding stage, the Dcr-1 DRBM domain and loqs-PB DRBM domains then bind the pre-miRNA in tandem to form a tight 'belt' around the pre-miRNA stem, the pre-miRNA loop is docked in the loop-binding region formed by DUF283, DRBM and part of the N terminus of Dcr-1, and the loqs-PB DRBM 1 and the wing domain of Dcr-1 act together to bind the 5' and 3' pre-miRNA termini within the PAZ and platform domains of Dcr-1. These interactions between the proteins and their pre-miRNA substrate stabilize a distorted form of the pre-miRNA and position the scissile phosphodiester bonds of the pre-miRNA at the RNase III catalytic cleavage sites of Dcr-1. Following Dcr-1 mediated cleavage, the miRNA duplex remains bound to loqs-PB DRBM 1, which dissociates from the Dcr-1 RNase III 1 domain but remains in contact with the PAZ and wing domains, suggesting that the heterodimer presents the mature miRNA to Ago2 for loading into the RNA-induced silencing complex (miRISC). Interacts with AGO2 and Fmr1 to form a RNA-induced silencing complex (siRISC), a ribonucleoprotein (RNP) complex involved in translation regulation; other components of the complex are RpL5, RpL11, AGO2 and Rm62. Interacts with piwi and vas; these interactions occur in the polar granules. Mg(2+) is required as a cofactor. It depends on Mn(2+) as a cofactor.

Its subcellular location is the cytoplasm. The protein localises to the cytosol. It catalyses the reaction Endonucleolytic cleavage to 5'-phosphomonoester.. Its activity is regulated as follows. Activity towards pre-miRNAs is not inhibited by inorganic phosphate. In terms of biological role, endoribonuclease which functions in microRNA- (miRNA) gene silencing and, independently of its ribonuclease III activity, also acts in the short interfering RNA- (siRNA) gene silencing pathway. Cleaves hairpin precursor miRNAs (pre-miRNA) to generate mature miRNAs (miRNAs) that are between twenty-one to twenty-four nucleotides in length and function in RNA silencing and post-transcriptional regulation of gene expression. Also functions in miRNA loading and assembly of the Argonaute 1 (AGO1)-containing RNA-induced silencing complex (miRISC), with the miRNAs serving as a guide to direct the miRISC to complementary RNAs to degrade them or prevent their translation. Independently of its catalytic activity, functions in the siRNA silencing pathway by promoting assembly of the siRNA-directed Argonaute 2 (AGO2)-containing RISC (siRISC). Required for the proper formation of a stable intermediate (R2) in siRISC assembly, which is formed from the R1 precursor complex (containing Dcr-2, R2D2 and the siRNA) and is used for assembly of the mature (R3) siRISC complex. It is not required for siRNA biogenesis. During embryogenesis, involved in germline fate determination. Post-transcriptionally regulates mei-P26 expression through the microRNA pathway, which in turn post-translationally regulates myc protein levels; involved in regulating cell and tissue growth. This is Endoribonuclease Dcr-1 from Drosophila melanogaster (Fruit fly).